We begin with the raw amino-acid sequence, 364 residues long: Aminomethyltransferase (364 aa).

This sequence belongs to the GcvT family. The glycine cleavage system is composed of four proteins: P, T, L and H.

It catalyses the reaction N(6)-[(R)-S(8)-aminomethyldihydrolipoyl]-L-lysyl-[protein] + (6S)-5,6,7,8-tetrahydrofolate = N(6)-[(R)-dihydrolipoyl]-L-lysyl-[protein] + (6R)-5,10-methylene-5,6,7,8-tetrahydrofolate + NH4(+). The glycine cleavage system catalyzes the degradation of glycine. This chain is Aminomethyltransferase, found in Escherichia coli O6:H1 (strain CFT073 / ATCC 700928 / UPEC).